A 1394-amino-acid chain; its full sequence is DNA-directed RNA polymerase subunit beta' (1394 aa).

The Zn(2+) site is built by Cys70, Cys72, Cys85, and Cys88. Mg(2+) is bound by residues Asp470, Asp472, and Asp474. Zn(2+) is bound by residues Cys815, Cys889, Cys896, and Cys899.

This sequence belongs to the RNA polymerase beta' chain family. In terms of assembly, the RNAP catalytic core consists of 2 alpha, 1 beta, 1 beta' and 1 omega subunit. When a sigma factor is associated with the core the holoenzyme is formed, which can initiate transcription. Mg(2+) serves as cofactor. It depends on Zn(2+) as a cofactor.

The catalysed reaction is RNA(n) + a ribonucleoside 5'-triphosphate = RNA(n+1) + diphosphate. In terms of biological role, DNA-dependent RNA polymerase catalyzes the transcription of DNA into RNA using the four ribonucleoside triphosphates as substrates. The chain is DNA-directed RNA polymerase subunit beta' from Anaeromyxobacter sp. (strain K).